Reading from the N-terminus, the 180-residue chain is Hypoxanthine-guanine phosphoribosyltransferase (180 aa).

GMP contacts are provided by residues lysine 40, glutamate 99 to threonine 107, lysine 131, and aspartate 159. The active-site Proton acceptor is the aspartate 103. Aspartate 159 contacts Mg(2+).

Belongs to the purine/pyrimidine phosphoribosyltransferase family. Requires Mg(2+) as cofactor.

The protein resides in the cytoplasm. It carries out the reaction IMP + diphosphate = hypoxanthine + 5-phospho-alpha-D-ribose 1-diphosphate. The catalysed reaction is GMP + diphosphate = guanine + 5-phospho-alpha-D-ribose 1-diphosphate. Its pathway is purine metabolism; IMP biosynthesis via salvage pathway; IMP from hypoxanthine: step 1/1. Functionally, converts guanine to guanosine monophosphate, and hypoxanthine to inosine monophosphate. Transfers the 5-phosphoribosyl group from 5-phosphoribosylpyrophosphate onto the purine. Plays a central role in the generation of purine nucleotides through the purine salvage pathway. This chain is Hypoxanthine-guanine phosphoribosyltransferase (hprT), found in Dictyostelium discoideum (Social amoeba).